The chain runs to 657 residues: Chemoreceptor McpA (657 aa).

Residues 1–5 lie on the Cytoplasmic side of the membrane; that stretch reads MKRIR. A helical transmembrane segment spans residues 6 to 29; sequence LVDLPLIIKIGFAPAFALLMLAVM. Over 30–188 the chain is Periplasmic; sequence AGGAILVQKS…ESESAKRQAQ (159 aa). The chain crosses the membrane as a helical span at residues 189-212; it reads ATAAMSVTIIMSLLTLGAVGALAF. The Cytoplasmic portion of the chain corresponds to 213 to 657; that stretch reads LTVMTTRKSI…APASDGWEEF (445 aa). HAMP domains follow at residues 216 to 269 and 297 to 349; these read MTTR…HLEQ and QEAS…ETMK. Residues 354-583 form the Methyl-accepting transducer domain; that stretch reads STDGLSTGAD…QSTAATHSLK (230 aa). The residue at position 378 (Gln378) is a Glutamate methyl ester (Gln). 2 positions are modified to glutamate methyl ester (Glu): Glu385 and Glu392. Gln574 carries the glutamate methyl ester (Gln) modification. Residues 634 to 657 are disordered; the sequence is ARPGRSSGSAALAQAPASDGWEEF.

This sequence belongs to the methyl-accepting chemotaxis (MCP) protein family.

It localises to the cell membrane. Chemotactic-signal transducers respond to changes in the concentration of attractants and repellents in the environment, transduce a signal from the outside to the inside of the cell, and facilitate sensory adaptation through the variation of the level of methylation. Attractants increase the level of methylation while repellents decrease the level of methylation. This is Chemoreceptor McpA (mcpA) from Caulobacter vibrioides (strain ATCC 19089 / CIP 103742 / CB 15) (Caulobacter crescentus).